We begin with the raw amino-acid sequence, 62 residues long: U10-buthitoxin-Hj1a (62 aa).

An N-terminal signal peptide occupies residues 1-22 (MQKIFIILVLFCILKFNVDVEG). Intrachain disulfides connect Cys28–Cys46, Cys33–Cys59, and Cys37–Cys61.

Belongs to the short scorpion toxin superfamily. Potassium channel inhibitor family. Alpha-KTx 23 subfamily. Expressed by the venom gland.

Its subcellular location is the secreted. Functionally, may block potassium channels. The sequence is that of U10-buthitoxin-Hj1a from Hottentotta judaicus (Black scorpion).